Here is a 742-residue protein sequence, read N- to C-terminus: MSTNPNTPAPPASRTNPISLRIYKAIGTSFDDVSSREALEIASGMYGPEDPKAKGKAQPEYEELEEDDDTLPKRRTLKGQSAAIARKYLKQDIETCLATGSTKFLEAFAEVDQKLNVLREHMQEMQVRCDQVQSELDQANSGTKFLLERADVLRSQRDSAQLRAHLITLFLSRFTLSNSELTALTSREVTIGQPLFDALDHVEKIRTDCEVLLSGEEGKAQAGLDIMSLTSEQLESGYSKIHRYCQFEFRQFTREAQLEASSVMRQAICRLRDRPALLADAIQTLTSTRQSSILHQFLDALTRGGPGGLPRPIEIHAHDPTRYVGDMLAWVHQTTATEHEFLEGMFGVKEKKRWVGQERGGEEGEEERMASEVLDKDLEGLSRPLKLRIQETIKSQEGIIMTYKIANLLHFYLVTMRKTIGGKAMLVQTLQEIHDQAYIAFYETLDAQGRGLLRFLHPPDATLTPPITLRDAAQILRELLFVYSTSLIDPAERESDADLAKLLDKAVGPCVEMCERMAEMRRGKSGGGEWERDIFMVNSLGYLEHTLEMYDFTTKTLHMLDEKIKTHVESMTFEHHGKLLESCGLAAVMRTIRTRPEDTPLSRLHATSPKSLTSALSKFSTWISTVDPSTSPRLALLTSPRLAVEIHRKALRKIYDAYGEICERVLDKAEGYEFGETMLRRGRDEVGVALGVGEDWELEEDTEEKSMKQKEQQDEDTEDQGEKGIMQEEHKAQDAGNTEDKA.

The tract at residues 692–742 (VGEDWELEEDTEEKSMKQKEQQDEDTEDQGEKGIMQEEHKAQDAGNTEDKA) is disordered. A compositionally biased stretch (acidic residues) spans 694-703 (EDWELEEDTE). The span at 720 to 742 (QGEKGIMQEEHKAQDAGNTEDKA) shows a compositional bias: basic and acidic residues.

The protein belongs to the COG6 family.

The protein resides in the golgi apparatus membrane. In terms of biological role, acts as a component of the peripheral membrane COG complex that is involved in intra-Golgi protein trafficking. COG is located at the cis-Golgi, and regulates tethering of retrograde intra-Golgi vesicles and possibly a number of other membrane trafficking events. In Cryptococcus neoformans var. neoformans serotype D (strain B-3501A) (Filobasidiella neoformans), this protein is Conserved oligomeric Golgi complex subunit 6 (COG6).